Here is a 160-residue protein sequence, read N- to C-terminus: Phosphopantetheine adenylyltransferase (160 aa).

S9 is a binding site for substrate. ATP contacts are provided by residues 9 to 10 (SF) and H17. Substrate-binding residues include K41, I73, and K87. ATP contacts are provided by residues 88-90 (GLR), E98, and 122-128 (YSFVSSS).

The protein belongs to the bacterial CoaD family. In terms of assembly, homohexamer. Mg(2+) serves as cofactor.

The protein resides in the cytoplasm. The enzyme catalyses (R)-4'-phosphopantetheine + ATP + H(+) = 3'-dephospho-CoA + diphosphate. It functions in the pathway cofactor biosynthesis; coenzyme A biosynthesis; CoA from (R)-pantothenate: step 4/5. Functionally, reversibly transfers an adenylyl group from ATP to 4'-phosphopantetheine, yielding dephospho-CoA (dPCoA) and pyrophosphate. The protein is Phosphopantetheine adenylyltransferase of Mycolicibacterium vanbaalenii (strain DSM 7251 / JCM 13017 / BCRC 16820 / KCTC 9966 / NRRL B-24157 / PYR-1) (Mycobacterium vanbaalenii).